Consider the following 458-residue polypeptide: tRNA modification GTPase MnmE (458 aa).

(6S)-5-formyl-5,6,7,8-tetrahydrofolate-binding residues include Arg26, Glu88, and Arg127. The TrmE-type G domain occupies 224 to 378 (GLSTAIIGRP…IEDRINQLFF (155 aa)). Asn234 is a binding site for K(+). Residues 234-239 (NVGKSS), 253-259 (TDIAGTT), and 278-281 (DTAG) each bind GTP. Ser238 contacts Mg(2+). K(+) is bound by residues Thr253, Ile255, and Thr258. Position 259 (Thr259) interacts with Mg(2+). Lys458 contributes to the (6S)-5-formyl-5,6,7,8-tetrahydrofolate binding site.

It belongs to the TRAFAC class TrmE-Era-EngA-EngB-Septin-like GTPase superfamily. TrmE GTPase family. As to quaternary structure, homodimer. Heterotetramer of two MnmE and two MnmG subunits. Requires K(+) as cofactor.

It is found in the cytoplasm. Functionally, exhibits a very high intrinsic GTPase hydrolysis rate. Involved in the addition of a carboxymethylaminomethyl (cmnm) group at the wobble position (U34) of certain tRNAs, forming tRNA-cmnm(5)s(2)U34. In Streptococcus pyogenes serotype M4 (strain MGAS10750), this protein is tRNA modification GTPase MnmE.